The chain runs to 181 residues: Adenine phosphoribosyltransferase (181 aa).

The protein belongs to the purine/pyrimidine phosphoribosyltransferase family. As to quaternary structure, homodimer.

The protein resides in the cytoplasm. The enzyme catalyses AMP + diphosphate = 5-phospho-alpha-D-ribose 1-diphosphate + adenine. The protein operates within purine metabolism; AMP biosynthesis via salvage pathway; AMP from adenine: step 1/1. Functionally, catalyzes a salvage reaction resulting in the formation of AMP, that is energically less costly than de novo synthesis. The polypeptide is Adenine phosphoribosyltransferase (Methylobacterium nodulans (strain LMG 21967 / CNCM I-2342 / ORS 2060)).